The following is a 405-amino-acid chain: Tryptophan synthase beta chain (405 aa).

Residue Lys-98 is modified to N6-(pyridoxal phosphate)lysine.

This sequence belongs to the TrpB family. Tetramer of two alpha and two beta chains. The cofactor is pyridoxal 5'-phosphate.

It carries out the reaction (1S,2R)-1-C-(indol-3-yl)glycerol 3-phosphate + L-serine = D-glyceraldehyde 3-phosphate + L-tryptophan + H2O. It participates in amino-acid biosynthesis; L-tryptophan biosynthesis; L-tryptophan from chorismate: step 5/5. In terms of biological role, the beta subunit is responsible for the synthesis of L-tryptophan from indole and L-serine. The chain is Tryptophan synthase beta chain from Xylella fastidiosa (strain M23).